The sequence spans 411 residues: Serine hydroxymethyltransferase (411 aa).

Position 120 to 122 (120 to 122 (GHL)) interacts with (6S)-5,6,7,8-tetrahydrofolate. Lys225 carries the N6-(pyridoxal phosphate)lysine modification. (6S)-5,6,7,8-tetrahydrofolate contacts are provided by residues Glu241 and 350–352 (SPF).

It belongs to the SHMT family. As to quaternary structure, homodimer. Pyridoxal 5'-phosphate serves as cofactor.

The protein resides in the cytoplasm. It catalyses the reaction (6R)-5,10-methylene-5,6,7,8-tetrahydrofolate + glycine + H2O = (6S)-5,6,7,8-tetrahydrofolate + L-serine. Its pathway is one-carbon metabolism; tetrahydrofolate interconversion. It functions in the pathway amino-acid biosynthesis; glycine biosynthesis; glycine from L-serine: step 1/1. Its function is as follows. Catalyzes the reversible interconversion of serine and glycine with tetrahydrofolate (THF) serving as the one-carbon carrier. This reaction serves as the major source of one-carbon groups required for the biosynthesis of purines, thymidylate, methionine, and other important biomolecules. Also exhibits THF-independent aldolase activity toward beta-hydroxyamino acids, producing glycine and aldehydes, via a retro-aldol mechanism. The chain is Serine hydroxymethyltransferase from Limosilactobacillus fermentum (strain NBRC 3956 / LMG 18251) (Lactobacillus fermentum).